Reading from the N-terminus, the 359-residue chain is tRNA/tmRNA (uracil-C(5))-methyltransferase (359 aa).

The S-adenosyl-L-methionine site is built by Gln-183, Tyr-211, Asn-216, Glu-232, and Asp-292. Cys-317 functions as the Nucleophile in the catalytic mechanism. Glu-351 acts as the Proton acceptor in catalysis.

The protein belongs to the class I-like SAM-binding methyltransferase superfamily. RNA M5U methyltransferase family. TrmA subfamily.

The catalysed reaction is uridine(54) in tRNA + S-adenosyl-L-methionine = 5-methyluridine(54) in tRNA + S-adenosyl-L-homocysteine + H(+). It carries out the reaction uridine(341) in tmRNA + S-adenosyl-L-methionine = 5-methyluridine(341) in tmRNA + S-adenosyl-L-homocysteine + H(+). Functionally, dual-specificity methyltransferase that catalyzes the formation of 5-methyluridine at position 54 (m5U54) in all tRNAs, and that of position 341 (m5U341) in tmRNA (transfer-mRNA). This is tRNA/tmRNA (uracil-C(5))-methyltransferase from Pseudomonas fluorescens (strain ATCC BAA-477 / NRRL B-23932 / Pf-5).